We begin with the raw amino-acid sequence, 285 residues long: Pantothenate synthetase (285 aa).

30–37 (MGFLHEGH) contacts ATP. The active-site Proton donor is the His-37. Gln-61 provides a ligand contact to (R)-pantoate. Gln-61 is a beta-alanine binding site. 147–150 (GQKD) contributes to the ATP binding site. Residue Gln-153 coordinates (R)-pantoate. Residues Val-176 and 184-187 (KSSR) contribute to the ATP site.

It belongs to the pantothenate synthetase family. In terms of assembly, homodimer.

It localises to the cytoplasm. The enzyme catalyses (R)-pantoate + beta-alanine + ATP = (R)-pantothenate + AMP + diphosphate + H(+). The protein operates within cofactor biosynthesis; (R)-pantothenate biosynthesis; (R)-pantothenate from (R)-pantoate and beta-alanine: step 1/1. Functionally, catalyzes the condensation of pantoate with beta-alanine in an ATP-dependent reaction via a pantoyl-adenylate intermediate. The protein is Pantothenate synthetase of Listeria monocytogenes serovar 1/2a (strain ATCC BAA-679 / EGD-e).